Reading from the N-terminus, the 39-residue chain is Photosystem II reaction center protein L (39 aa).

Residues 18 to 38 traverse the membrane as a helical segment; it reads SLYLGLLLVFVLGILFSSYFF.

It belongs to the PsbL family. PSII is composed of 1 copy each of membrane proteins PsbA, PsbB, PsbC, PsbD, PsbE, PsbF, PsbH, PsbI, PsbJ, PsbK, PsbL, PsbM, PsbT, PsbX, PsbY, Psb30/Ycf12, peripheral proteins PsbO, CyanoQ (PsbQ), PsbU, PsbV and a large number of cofactors. It forms dimeric complexes.

It is found in the cellular thylakoid membrane. One of the components of the core complex of photosystem II (PSII). PSII is a light-driven water:plastoquinone oxidoreductase that uses light energy to abstract electrons from H(2)O, generating O(2) and a proton gradient subsequently used for ATP formation. It consists of a core antenna complex that captures photons, and an electron transfer chain that converts photonic excitation into a charge separation. This subunit is found at the monomer-monomer interface and is required for correct PSII assembly and/or dimerization. This is Photosystem II reaction center protein L from Prochlorococcus marinus (strain SARG / CCMP1375 / SS120).